A 147-amino-acid chain; its full sequence is UPF0178 protein AFE_3267 (147 aa).

It belongs to the UPF0178 family.

This chain is UPF0178 protein AFE_3267, found in Acidithiobacillus ferrooxidans (strain ATCC 23270 / DSM 14882 / CIP 104768 / NCIMB 8455) (Ferrobacillus ferrooxidans (strain ATCC 23270)).